A 399-amino-acid chain; its full sequence is Homoserine O-acetyltransferase (399 aa).

The 310-residue stretch at 63–372 (NAILVCHALT…TDRGHDAFLL (310 aa)) folds into the AB hydrolase-1 domain. S168 serves as the catalytic Nucleophile. Substrate is bound at residue R238. Catalysis depends on residues D334 and H367. Position 368 (D368) interacts with substrate.

It belongs to the AB hydrolase superfamily. MetX family. Homodimer.

The protein localises to the cytoplasm. The catalysed reaction is L-homoserine + acetyl-CoA = O-acetyl-L-homoserine + CoA. It participates in amino-acid biosynthesis; L-methionine biosynthesis via de novo pathway; O-acetyl-L-homoserine from L-homoserine: step 1/1. Transfers an acetyl group from acetyl-CoA to L-homoserine, forming acetyl-L-homoserine. This chain is Homoserine O-acetyltransferase, found in Nitrobacter hamburgensis (strain DSM 10229 / NCIMB 13809 / X14).